The chain runs to 610 residues: F-box/LRR-repeat protein 4 (610 aa).

Residues 5-52 (DRINNCLPEELILEIFRRLESKPNRDACSLVCKRWLSLERFSRTTLRI) form the F-box domain. 19 LRR repeats span residues 53–79 (GASF…HVDE), 124–149 (SSSL…SLIW), 150–175 (CPNV…DLQG), 178–200 (VGDQ…NLRF), 201–227 (CEGL…GVAA), 228–253 (SAKI…YLDS), 256–277 (IHDK…LKLQ), 278–303 (CVSV…ALYS), 304–329 (FQHF…TLSD), 330–355 (CYFV…EING), 356–381 (CHNI…ALLY), 382–407 (CQRI…HLVD), 408–433 (CSGI…HIRR), 434–459 (CYEI…SLRF), 460–484 (CDKV…NVSG), 485–510 (CNQI…DISV), 511–536 (LQNI…VLSH), 537–562 (CHHI…HMVY), and 563–588 (CPGI…LIEK). The segment at 88 to 125 (LSPSPKRKRGRDSSSPSSSKRKKLTDKTHSGAENVESS) is disordered.

This is F-box/LRR-repeat protein 4 (FBL4) from Arabidopsis thaliana (Mouse-ear cress).